The following is a 460-amino-acid chain: Putative 2,3-dihydroxypropane-1-sulfonate exporter (460 aa).

The Cytoplasmic portion of the chain corresponds to M1–K18. The chain crosses the membrane as a helical span at residues L19 to L39. The Periplasmic segment spans residues L40–V46. Residues L47–F67 form a helical membrane-spanning segment. Topologically, residues T68–F91 are cytoplasmic. The helical transmembrane segment at V92–F112 threads the bilayer. At E113–T122 the chain is on the periplasmic side. The chain crosses the membrane as a helical span at residues M123–V143. Residues P144–Q161 lie on the Cytoplasmic side of the membrane. The chain crosses the membrane as a helical span at residues G162–I182. Residues E183–Y190 lie on the Periplasmic side of the membrane. A helical membrane pass occupies residues I191–G211. The Cytoplasmic portion of the chain corresponds to V212 to P242. The helical transmembrane segment at L243–I263 threads the bilayer. Residues Q264–P275 lie on the Periplasmic side of the membrane. A helical transmembrane segment spans residues I276–M296. At P297–K307 the chain is on the cytoplasmic side. The chain crosses the membrane as a helical span at residues V308–G328. Position 329 (G329) is a topological domain, periplasmic. The helical transmembrane segment at S330–L350 threads the bilayer. Over N351–Q386 the chain is Cytoplasmic. The helical transmembrane segment at A387–V407 threads the bilayer. Topologically, residues Q408–Q418 are periplasmic. Residues L419–Y439 form a helical membrane-spanning segment. Topologically, residues N440–V460 are cytoplasmic.

It belongs to the sodium:galactoside symporter (TC 2.A.2) family.

It localises to the cell inner membrane. In terms of biological role, could be involved in the export of 2,3-dihydroxypropane-1-sulfonate (DHPS). The polypeptide is Putative 2,3-dihydroxypropane-1-sulfonate exporter (yihP) (Salmonella typhimurium (strain LT2 / SGSC1412 / ATCC 700720)).